Reading from the N-terminus, the 333-residue chain is MIDGQTTEPKQKTRIILAPMQGLVDDVMRDLLTRIGGYDECVSEFVRITHTVHSRATWLKYVPEIANGNKTFSGTPCTVQLLGSDADNMAANALEAVRFGADKIDLNFGCPAPTVNRHKGGAILLKEPELIFHIVKTLRERLPAHIPLTAKMRLGYEDKSPALECACAIAEGGACGLTVHARTKAEGYEPPAHWEWIRKIRDSVDIPVTANGDVFSLQDYIGIKTISGCNSVMLGRGAVIRPDLARQIKQYENGGPVKDTDFAEVSKWIRQFFELCLTKEANNKYPIARLKQWLGMMKKTFDPAQTLFDRVRTVKDADEVRRILNAFEHEINV.

Residues 19–21 (PMQ) and Q80 each bind FMN. The active-site Proton donor is C110. Residues K151, 211 to 213 (NGD), and 235 to 236 (GR) each bind FMN.

It belongs to the Dus family. DusC subfamily. Requires FMN as cofactor.

The catalysed reaction is 5,6-dihydrouridine(16) in tRNA + NADP(+) = uridine(16) in tRNA + NADPH + H(+). It catalyses the reaction 5,6-dihydrouridine(16) in tRNA + NAD(+) = uridine(16) in tRNA + NADH + H(+). Catalyzes the synthesis of 5,6-dihydrouridine (D), a modified base found in the D-loop of most tRNAs, via the reduction of the C5-C6 double bond in target uridines. Specifically modifies U16 in tRNAs. The polypeptide is tRNA-dihydrouridine(16) synthase (Neisseria meningitidis serogroup A / serotype 4A (strain DSM 15465 / Z2491)).